The primary structure comprises 471 residues: Glutamate--tRNA ligase (471 aa).

A 'HIGH' region motif is present at residues 9–19 (PSPTGFLHVGG). Zn(2+) is bound by residues Cys98, Cys100, Cys125, and Asp127. The 'KMSKS' region motif lies at 237–241 (KLSKR). Position 240 (Lys240) interacts with ATP.

The protein belongs to the class-I aminoacyl-tRNA synthetase family. Glutamate--tRNA ligase type 1 subfamily. In terms of assembly, monomer. It depends on Zn(2+) as a cofactor.

It is found in the cytoplasm. It catalyses the reaction tRNA(Glu) + L-glutamate + ATP = L-glutamyl-tRNA(Glu) + AMP + diphosphate. In terms of biological role, catalyzes the attachment of glutamate to tRNA(Glu) in a two-step reaction: glutamate is first activated by ATP to form Glu-AMP and then transferred to the acceptor end of tRNA(Glu). The chain is Glutamate--tRNA ligase from Aeromonas hydrophila subsp. hydrophila (strain ATCC 7966 / DSM 30187 / BCRC 13018 / CCUG 14551 / JCM 1027 / KCTC 2358 / NCIMB 9240 / NCTC 8049).